Consider the following 357-residue polypeptide: Peptide chain release factor 1 (357 aa).

N5-methylglutamine is present on Q234. Residues 282-313 (DSKKQEQRSNNRKQQVGSGDRSERIRTYNFPQ) are disordered.

It belongs to the prokaryotic/mitochondrial release factor family. Post-translationally, methylated by PrmC. Methylation increases the termination efficiency of RF1.

It localises to the cytoplasm. In terms of biological role, peptide chain release factor 1 directs the termination of translation in response to the peptide chain termination codons UAG and UAA. This is Peptide chain release factor 1 from Borreliella afzelii (strain PKo) (Borrelia afzelii).